The chain runs to 171 residues: 3-hydroxydecanoyl-[acyl-carrier-protein] dehydratase (171 aa).

The active site involves His70.

Belongs to the thioester dehydratase family. FabA subfamily. As to quaternary structure, homodimer.

It is found in the cytoplasm. It carries out the reaction a (3R)-hydroxyacyl-[ACP] = a (2E)-enoyl-[ACP] + H2O. The catalysed reaction is (3R)-hydroxydecanoyl-[ACP] = (2E)-decenoyl-[ACP] + H2O. The enzyme catalyses (2E)-decenoyl-[ACP] = (3Z)-decenoyl-[ACP]. It participates in lipid metabolism; fatty acid biosynthesis. Functionally, necessary for the introduction of cis unsaturation into fatty acids. Catalyzes the dehydration of (3R)-3-hydroxydecanoyl-ACP to E-(2)-decenoyl-ACP and then its isomerization to Z-(3)-decenoyl-ACP. Can catalyze the dehydratase reaction for beta-hydroxyacyl-ACPs with saturated chain lengths up to 16:0, being most active on intermediate chain length. The chain is 3-hydroxydecanoyl-[acyl-carrier-protein] dehydratase from Shewanella woodyi (strain ATCC 51908 / MS32).